Reading from the N-terminus, the 193-residue chain is MIGRIAGTLLEKNPPHILVDCNGVGYEVDVPMSTFYNLPHTGEKVVLLTQLIVREDAHLLYGFLTPPERSTFRELLKITGVGARMALAVLSGMSVAELSQAVTLQDAARLTRVPGIGKKTAERLLLELKGKLGADLGPLAGAASPSDHATDILNALVALGYSEKEALAAIKNVPAGTGVSEGIKLSLKALSKA.

Positions Met-1–Leu-64 are domain I. The segment at Thr-65–Leu-139 is domain II. The interval Leu-139–Ala-143 is flexible linker. The segment at Ser-144–Ala-193 is domain III.

Belongs to the RuvA family. Homotetramer. Forms an RuvA(8)-RuvB(12)-Holliday junction (HJ) complex. HJ DNA is sandwiched between 2 RuvA tetramers; dsDNA enters through RuvA and exits via RuvB. An RuvB hexamer assembles on each DNA strand where it exits the tetramer. Each RuvB hexamer is contacted by two RuvA subunits (via domain III) on 2 adjacent RuvB subunits; this complex drives branch migration. In the full resolvosome a probable DNA-RuvA(4)-RuvB(12)-RuvC(2) complex forms which resolves the HJ.

Its subcellular location is the cytoplasm. The RuvA-RuvB-RuvC complex processes Holliday junction (HJ) DNA during genetic recombination and DNA repair, while the RuvA-RuvB complex plays an important role in the rescue of blocked DNA replication forks via replication fork reversal (RFR). RuvA specifically binds to HJ cruciform DNA, conferring on it an open structure. The RuvB hexamer acts as an ATP-dependent pump, pulling dsDNA into and through the RuvAB complex. HJ branch migration allows RuvC to scan DNA until it finds its consensus sequence, where it cleaves and resolves the cruciform DNA. The sequence is that of Holliday junction branch migration complex subunit RuvA from Burkholderia mallei (strain NCTC 10229).